Here is a 188-residue protein sequence, read N- to C-terminus: Protein salivary glands marred (188 aa).

This sequence belongs to the TNFAIP8 family. In terms of assembly, interacts with the Ste20-like MAP kinase msn.

Its subcellular location is the cytoplasm. It localises to the cytoskeleton. Its function is as follows. Important for modulating JNK signaling, cytoskeletal remodeling and autophagy in larval salivary glands. During salivary gland development, involved in the positive regulation of the JNK signaling pathway, acting downstream of the TNF ligand egr and upstream of bsk. In Drosophila melanogaster (Fruit fly), this protein is Protein salivary glands marred.